Here is a 408-residue protein sequence, read N- to C-terminus: Cytochrome bc1 complex Rieske iron-sulfur subunit (408 aa).

Helical transmembrane passes span 56 to 76 (VGIW…TYIF), 98 to 118 (MLGI…VLYV), and 166 to 186 (LLAG…GGMI). Residues 293–390 (HGPRNAVMLI…ITVDEEGYLI (98 aa)) form the Rieske domain. [2Fe-2S] cluster is bound by residues Cys333, His335, Cys352, and His355. An intrachain disulfide couples Cys338 to Cys354.

It belongs to the Rieske iron-sulfur protein family. In terms of assembly, the cytochrome bc1 complex is composed of a cytochrome b (QcrB), the Rieske iron-sulfur protein (QcrA) and a diheme cytochrome c (QcrC) subunit. The bc1 complex forms a supercomplex with cytochrome c oxidase (cytochrome aa3). Requires [2Fe-2S] cluster as cofactor.

The protein resides in the cell membrane. Its function is as follows. Iron-sulfur subunit of the cytochrome bc1 complex, an essential component of the respiratory electron transport chain required for ATP synthesis. The bc1 complex catalyzes the oxidation of menaquinol and the reduction of cytochrome c in the respiratory chain. The bc1 complex operates through a Q-cycle mechanism that couples electron transfer to generation of the proton gradient that drives ATP synthesis. The sequence is that of Cytochrome bc1 complex Rieske iron-sulfur subunit (qcrA) from Corynebacterium efficiens (strain DSM 44549 / YS-314 / AJ 12310 / JCM 11189 / NBRC 100395).